We begin with the raw amino-acid sequence, 260 residues long: UPF0246 protein BamMC406_2140 (260 aa).

It belongs to the UPF0246 family.

In Burkholderia ambifaria (strain MC40-6), this protein is UPF0246 protein BamMC406_2140.